Consider the following 525-residue polypeptide: GMP synthase [glutamine-hydrolyzing] (525 aa).

A Glutamine amidotransferase type-1 domain is found at 9 to 207 (RILILDFGSQ…VLGICGCEAL (199 aa)). Residue Cys86 is the Nucleophile of the active site. Active-site residues include His181 and Glu183. The GMPS ATP-PPase domain maps to 208–400 (WTSATIIEDA…LGLPYDMLYR (193 aa)). 235–241 (SGGVDSS) contacts ATP.

As to quaternary structure, homodimer.

It catalyses the reaction XMP + L-glutamine + ATP + H2O = GMP + L-glutamate + AMP + diphosphate + 2 H(+). Its pathway is purine metabolism; GMP biosynthesis; GMP from XMP (L-Gln route): step 1/1. Functionally, catalyzes the synthesis of GMP from XMP. The polypeptide is GMP synthase [glutamine-hydrolyzing] (Yersinia pestis bv. Antiqua (strain Antiqua)).